Reading from the N-terminus, the 216-residue chain is Phosphatidylserine decarboxylase proenzyme (216 aa).

Catalysis depends on Ser185, which acts as the Schiff-base intermediate with substrate; via pyruvic acid. At Ser185 the chain carries Pyruvic acid (Ser); by autocatalysis.

It belongs to the phosphatidylserine decarboxylase family. PSD-A subfamily. Heterodimer of a large membrane-associated beta subunit and a small pyruvoyl-containing alpha subunit. It depends on pyruvate as a cofactor. Post-translationally, is synthesized initially as an inactive proenzyme. Formation of the active enzyme involves a self-maturation process in which the active site pyruvoyl group is generated from an internal serine residue via an autocatalytic post-translational modification. Two non-identical subunits are generated from the proenzyme in this reaction, and the pyruvate is formed at the N-terminus of the alpha chain, which is derived from the carboxyl end of the proenzyme. The post-translation cleavage follows an unusual pathway, termed non-hydrolytic serinolysis, in which the side chain hydroxyl group of the serine supplies its oxygen atom to form the C-terminus of the beta chain, while the remainder of the serine residue undergoes an oxidative deamination to produce ammonia and the pyruvoyl prosthetic group on the alpha chain.

It localises to the cell membrane. It catalyses the reaction a 1,2-diacyl-sn-glycero-3-phospho-L-serine + H(+) = a 1,2-diacyl-sn-glycero-3-phosphoethanolamine + CO2. It participates in phospholipid metabolism; phosphatidylethanolamine biosynthesis; phosphatidylethanolamine from CDP-diacylglycerol: step 2/2. Functionally, catalyzes the formation of phosphatidylethanolamine (PtdEtn) from phosphatidylserine (PtdSer). The chain is Phosphatidylserine decarboxylase proenzyme from Nitrosomonas europaea (strain ATCC 19718 / CIP 103999 / KCTC 2705 / NBRC 14298).